The following is a 514-amino-acid chain: Cytochrome P450 71AP13 (514 aa).

Residues 20 to 37 form a helical membrane-spanning segment; sequence HSSLFAFSLLILLLKFIY. Residues asparagine 127 and asparagine 184 are each glycosylated (N-linked (GlcNAc...) asparagine). Cysteine 455 contacts heme.

This sequence belongs to the cytochrome P450 family. Heme serves as cofactor. Expressed in fruit kernel, seedlings, leaves and stems.

The protein resides in the membrane. This chain is Cytochrome P450 71AP13, found in Prunus mume (Japanese apricot).